A 339-amino-acid polypeptide reads, in one-letter code: UDP-N-acetylenolpyruvoylglucosamine reductase (339 aa).

Positions 18 to 189 (GVEVKAKWFA…LRVRFALNRV (172 aa)) constitute an FAD-binding PCMH-type domain. Arginine 166 is an active-site residue. Serine 239 serves as the catalytic Proton donor. Residue glutamate 335 is part of the active site.

The protein belongs to the MurB family. FAD serves as cofactor.

It localises to the cytoplasm. It carries out the reaction UDP-N-acetyl-alpha-D-muramate + NADP(+) = UDP-N-acetyl-3-O-(1-carboxyvinyl)-alpha-D-glucosamine + NADPH + H(+). It functions in the pathway cell wall biogenesis; peptidoglycan biosynthesis. Cell wall formation. This is UDP-N-acetylenolpyruvoylglucosamine reductase from Pseudomonas fluorescens (strain ATCC BAA-477 / NRRL B-23932 / Pf-5).